A 439-amino-acid chain; its full sequence is Putative FBD-associated F-box protein At1g05080 (439 aa).

The F-box domain occupies 12–58 (EDRISVLPEDLLVVILDLLPTKDVVATMILSKRWLSIWTMVRTLEYT). One can recognise an FBD domain in the interval 360–410 (SWKQPSHVPECLSSQLEIFEWRDYGDRIIEEEFLTYVLANSKRLKTATISL).

The chain is Putative FBD-associated F-box protein At1g05080 from Arabidopsis thaliana (Mouse-ear cress).